The primary structure comprises 288 residues: UDP-3-O-acyl-N-acetylglucosamine deacetylase (288 aa).

Zn(2+)-binding residues include His-79, His-236, and Asp-240. Residue His-263 is the Proton donor of the active site.

Belongs to the LpxC family. Requires Zn(2+) as cofactor.

It catalyses the reaction a UDP-3-O-[(3R)-3-hydroxyacyl]-N-acetyl-alpha-D-glucosamine + H2O = a UDP-3-O-[(3R)-3-hydroxyacyl]-alpha-D-glucosamine + acetate. The protein operates within glycolipid biosynthesis; lipid IV(A) biosynthesis; lipid IV(A) from (3R)-3-hydroxytetradecanoyl-[acyl-carrier-protein] and UDP-N-acetyl-alpha-D-glucosamine: step 2/6. Its function is as follows. Catalyzes the hydrolysis of UDP-3-O-myristoyl-N-acetylglucosamine to form UDP-3-O-myristoylglucosamine and acetate, the committed step in lipid A biosynthesis. The protein is UDP-3-O-acyl-N-acetylglucosamine deacetylase of Rickettsia conorii (strain ATCC VR-613 / Malish 7).